The primary structure comprises 95 residues: Aspartyl/glutamyl-tRNA(Asn/Gln) amidotransferase subunit C (95 aa).

It belongs to the GatC family. As to quaternary structure, heterotrimer of A, B and C subunits.

It catalyses the reaction L-glutamyl-tRNA(Gln) + L-glutamine + ATP + H2O = L-glutaminyl-tRNA(Gln) + L-glutamate + ADP + phosphate + H(+). The catalysed reaction is L-aspartyl-tRNA(Asn) + L-glutamine + ATP + H2O = L-asparaginyl-tRNA(Asn) + L-glutamate + ADP + phosphate + 2 H(+). Functionally, allows the formation of correctly charged Asn-tRNA(Asn) or Gln-tRNA(Gln) through the transamidation of misacylated Asp-tRNA(Asn) or Glu-tRNA(Gln) in organisms which lack either or both of asparaginyl-tRNA or glutaminyl-tRNA synthetases. The reaction takes place in the presence of glutamine and ATP through an activated phospho-Asp-tRNA(Asn) or phospho-Glu-tRNA(Gln). This Pseudomonas syringae pv. syringae (strain B728a) protein is Aspartyl/glutamyl-tRNA(Asn/Gln) amidotransferase subunit C.